The following is a 326-amino-acid chain: Probable UDP-3-O-acyl-N-acetylglucosamine deacetylase 2, mitochondrial (326 aa).

Residues 1–21 (MRLPVTVKATKPSFLVIWIRY) constitute a mitochondrion transit peptide. Zn(2+) is bound by residues His109, His281, and Asp285.

This sequence belongs to the LpxC family. It depends on Zn(2+) as a cofactor.

Its subcellular location is the mitochondrion. The catalysed reaction is a UDP-3-O-[(3R)-3-hydroxyacyl]-N-acetyl-alpha-D-glucosamine + H2O = a UDP-3-O-[(3R)-3-hydroxyacyl]-alpha-D-glucosamine + acetate. It functions in the pathway glycolipid biosynthesis; lipid IV(A) biosynthesis; lipid IV(A) from (3R)-3-hydroxytetradecanoyl-[acyl-carrier-protein] and UDP-N-acetyl-alpha-D-glucosamine: step 2/6. Involved in the biosynthesis of lipid A, a phosphorylated glycolipid that in bacteria anchors the lipopolysaccharide to the outer membrane of the cell. Lipid A-like molecules in plants may serve as structural components of the outer membranes of mitochondria and/or chloroplasts, or may be involved in signal transduction or plant defense responses (Potential). The chain is Probable UDP-3-O-acyl-N-acetylglucosamine deacetylase 2, mitochondrial (LPXC2) from Arabidopsis thaliana (Mouse-ear cress).